A 290-amino-acid chain; its full sequence is Arginine and glutamate-rich protein 1 (290 aa).

A compositionally biased stretch (polar residues) spans 1–10 (MGSRSRTPSP). Disordered regions lie at residues 1–137 (MGSR…AKEL), 193–216 (ERRREQIREEERRREEDEKQKREE), and 249–290 (MDEE…PGAL). A compositionally biased stretch (basic residues) spans 12–28 (GKRRHHKSKHKKRSKSH). Composition is skewed to basic and acidic residues over residues 29–44 (HDHERPSTRTDRDKSS) and 53–76 (RERDRDRERDRHRSDRHTERDYRH). Phosphoserine occurs at positions 77 and 79. Residues 88–99 (SSSSSDSQYSEQ) are compositionally biased toward low complexity. Positions 111-269 (FKKLDEQNQM…QEKRVKEEQK (159 aa)) form a coiled coil. The segment covering 124–137 (RLAEMERQRRAKEL) has biased composition (basic and acidic residues). Residues 249 to 269 (MDEERQRMRKEQEKRVKEEQK) show a composition bias toward basic and acidic residues.

The protein belongs to the ARGLU1 family. As to quaternary structure, associates with the U1-snRNP complex; the interaction is enhanced by binding of Arglu1 to a stable intronic sequence RNA (sisRNA) produced from the Arglu1 gene by premature cleavage.

It localises to the nucleus. Its subcellular location is the nucleus speckle. In terms of biological role, post-transcriptional regulator of gene expression; modulates splicing and premature cleavage at cryptic polyadenylation sites of its own pre-mRNA through binding and regulation of the U1-snRNP complex. In Drosophila melanogaster (Fruit fly), this protein is Arginine and glutamate-rich protein 1.